Reading from the N-terminus, the 93-residue chain is Putative pterin-4-alpha-carbinolamine dehydratase (93 aa).

The protein belongs to the pterin-4-alpha-carbinolamine dehydratase family.

The catalysed reaction is (4aS,6R)-4a-hydroxy-L-erythro-5,6,7,8-tetrahydrobiopterin = (6R)-L-erythro-6,7-dihydrobiopterin + H2O. This Mycolicibacterium vanbaalenii (strain DSM 7251 / JCM 13017 / BCRC 16820 / KCTC 9966 / NRRL B-24157 / PYR-1) (Mycobacterium vanbaalenii) protein is Putative pterin-4-alpha-carbinolamine dehydratase.